Reading from the N-terminus, the 506-residue chain is ATP synthase subunit alpha (506 aa).

169-176 is an ATP binding site; the sequence is GDRQTGKT.

This sequence belongs to the ATPase alpha/beta chains family. F-type ATPases have 2 components, CF(1) - the catalytic core - and CF(0) - the membrane proton channel. CF(1) has five subunits: alpha(3), beta(3), gamma(1), delta(1), epsilon(1). CF(0) has three main subunits: a(1), b(2) and c(9-12). The alpha and beta chains form an alternating ring which encloses part of the gamma chain. CF(1) is attached to CF(0) by a central stalk formed by the gamma and epsilon chains, while a peripheral stalk is formed by the delta and b chains.

It is found in the cell membrane. It catalyses the reaction ATP + H2O + 4 H(+)(in) = ADP + phosphate + 5 H(+)(out). Functionally, produces ATP from ADP in the presence of a proton gradient across the membrane. The alpha chain is a regulatory subunit. This Acetivibrio thermocellus (strain ATCC 27405 / DSM 1237 / JCM 9322 / NBRC 103400 / NCIMB 10682 / NRRL B-4536 / VPI 7372) (Clostridium thermocellum) protein is ATP synthase subunit alpha.